The chain runs to 368 residues: DNA-directed RNA polymerase II subunit GRINL1A (368 aa).

Residues 29–68 (KRQERLLRNEKFICKLPDKGKKIFDSFAKLKAAIAECEEV) form an important for transcription repressor activity region. Composition is skewed to polar residues over residues 116–131 (SSVDNIKSSQTSQNQG), 205–224 (GEQQSEENASTKNLTGLSSG), and 258–273 (QNDSSSHCQKSGSPIS). Disordered stretches follow at residues 116 to 186 (SSVD…DTSS), 203 to 227 (DQGEQQSEENASTKNLTGLSSGTEK), and 255 to 282 (PFRQNDSSSHCQKSGSPISSEERRRRDK). Residues 227–298 (KKPHYMEVLE…TAARLLPLHH (72 aa)) form an interaction with Pol II region. Phosphoserine is present on Ser-270. Positions 299–314 (MPTQLLSIEESLALQK) are important for transcription repressor activity. Residues 301–335 (TQLLSIEESLALQKQQKQNYEEMQAKLAAQKLAER) are a coiled coil. The interval 315–340 (QQKQNYEEMQAKLAAQKLAERLNIKM) is interaction with Pol II. The interval 339–368 (KMRSYNPEGESSGRYREVRDEDDDWSSDEF) is disordered. The span at 358-368 (DEDDDWSSDEF) shows a compositional bias: acidic residues.

This sequence belongs to the GRINL1 family. In terms of assembly, component of the Pol II(G) complex, which contains the RNA polymerase II (Pol II) core complex subunits and POLR2M isoform 1. Pol II(G) appears to be an abundant form of Pol II. In terms of processing, dephosphorylated at Ser-270 by the PNUTS-PP1 complex, promoting RNA polymerase II transcription pause-release. In terms of tissue distribution, detected in adult an fetal brain. Detected in heart, kidney, skeletal muscle, small intestine, lung, prostate and testis.

The protein localises to the nucleus. Appears to be a stable component of the Pol II(G) complex form of RNA polymerase II (Pol II). Pol II synthesizes mRNA precursors and many functional non-coding RNAs and is the central component of the basal RNA polymerase II transcription machinery. May play a role in the Mediator complex-dependent regulation of transcription activation. Acts as a negative regulator of transcriptional activation; this repression is relieved by the Mediator complex, which restores Pol II(G) activator-dependent transcription to a level equivalent to that of Pol II. The polypeptide is DNA-directed RNA polymerase II subunit GRINL1A (POLR2M) (Homo sapiens (Human)).